Here is a 73-residue protein sequence, read N- to C-terminus: MNLETPSQENLNFMLTEITTKLKMVNVGVFENLELDSVDYNALIDIYQLIKRKSNFSPREMQLFAEELRRIRK.

The protein belongs to the UPF0435 family.

This chain is UPF0435 protein Lm4b_01721, found in Listeria monocytogenes serotype 4b (strain CLIP80459).